A 265-amino-acid polypeptide reads, in one-letter code: MYVGYVLDKDSPVYPGPARPASLGLGPQAYGPPAPPPAPPQYPDFPSYSHVEPAPAPPTAWGAPFPAPKDDWAAAYGPGPAAPAASPASLAFGPPPDFSPVPAPPGPGPGLLAQPLGGPGTPSSPGAQRRTPYEWMRRSVAAGGGGVSGKTRTKDKYRVVYTDHQRLELEKEFHYSRYITIRRKSELAANLGLTERQVKIWFQNRRAKERKVNKKKQQQQQPPQPPTAHDITATPARPSLGGLCPSNTSLLATSSPMPVKEEFLP.

Residues 9-152 (KDSPVYPGPA…GGGGVSGKTR (144 aa)) form a disordered region. Residues 30–43 (YGPPAPPPAPPQYP) show a composition bias toward pro residues. A compositionally biased stretch (low complexity) spans 73–92 (AAAYGPGPAAPAASPASLAF). Positions 93–108 (GPPPDFSPVPAPPGPG) are enriched in pro residues. Residues 110–126 (GLLAQPLGGPGTPSSPG) show a composition bias toward low complexity. The segment at residues 154-213 (KDKYRVVYTDHQRLELEKEFHYSRYITIRRKSELAANLGLTERQVKIWFQNRRAKERKVN) is a DNA-binding region (homeobox). The tract at residues 157-178 (YRVVYTDHQRLELEKEFHYSRY) is interaction with DNA. The interaction with 5-mCpG DNA stretch occupies residues 196–207 (RQVKIWFQNRRA). Residues 206-217 (RAKERKVNKKKQ) show a composition bias toward basic residues. Residues 206 to 265 (RAKERKVNKKKQQQQQPPQPPTAHDITATPARPSLGGLCPSNTSLLATSSPMPVKEEFLP) are disordered. Polar residues predominate over residues 245-256 (PSNTSLLATSSP).

The protein belongs to the Caudal homeobox family.

Its subcellular location is the nucleus. Its function is as follows. Plays a role in transcriptional regulation. Involved in activated KRAS-mediated transcriptional activation of PRKD1 in colorectal cancer (CRC) cells. Binds to the PRKD1 promoter in colorectal cancer (CRC) cells. Could play a role in the terminal differentiation of the intestine. Binds preferentially to methylated DNA. The sequence is that of Homeobox protein CDX-1 (CDX1) from Pongo pygmaeus (Bornean orangutan).